A 434-amino-acid chain; its full sequence is Glutamyl-tRNA reductase 2 (434 aa).

Residues 57–60 (TCNR), S113, 118–120 (DFE), and Q124 contribute to the substrate site. The active-site Nucleophile is C58. Residue 193–198 (GTGKIG) participates in NADP(+) binding.

The protein belongs to the glutamyl-tRNA reductase family. As to quaternary structure, homodimer.

It catalyses the reaction (S)-4-amino-5-oxopentanoate + tRNA(Glu) + NADP(+) = L-glutamyl-tRNA(Glu) + NADPH + H(+). It participates in porphyrin-containing compound metabolism; protoporphyrin-IX biosynthesis; 5-aminolevulinate from L-glutamyl-tRNA(Glu): step 1/2. In terms of biological role, catalyzes the NADPH-dependent reduction of glutamyl-tRNA(Glu) to glutamate 1-semialdehyde (GSA). The sequence is that of Glutamyl-tRNA reductase 2 from Flavobacterium johnsoniae (strain ATCC 17061 / DSM 2064 / JCM 8514 / BCRC 14874 / CCUG 350202 / NBRC 14942 / NCIMB 11054 / UW101) (Cytophaga johnsonae).